The following is a 726-amino-acid chain: Endo-1,4-beta-xylanase/feruloyl esterase (726 aa).

Residues 1–19 (MKKLLVALSLIAGSLTASA) form the signal peptide. Residues 27-369 (YAAGPGLKDA…KRSLQIIRDF (343 aa)) form the GH10 domain. The active-site Proton donor; for xylanase activity is Glu161. Glu280 serves as the catalytic Nucleophile; for xylanase activity. Residues 370 to 726 (DAAMDNRKPK…LEKMAQSLFK (357 aa)) form a feruloyl esterase region. Ser629 functions as the Nucleophile; for esterase activity in the catalytic mechanism.

It in the N-terminal section; belongs to the glycosyl hydrolase 10 (cellulase F) family. In terms of assembly, monomer or homodimer.

The catalysed reaction is Endohydrolysis of (1-&gt;4)-beta-D-xylosidic linkages in xylans.. It carries out the reaction feruloyl-polysaccharide + H2O = ferulate + polysaccharide.. It functions in the pathway glycan degradation; xylan degradation. Functionally, involved in degradation of plant cell wall polysaccharides. Has endo-xylanase activity towards substrates such as oat spelt xylan (OSX), acetylated xylo-oligosaccharides and acetylated xylan, producing primarily xylobiose; cannot hydrolyze xylobiose to xylose. Also has feruloyl esterase activity, releasing ferulic acid from methylferulate, and from the more natural substrates wheat bran, corn fiber, and XOS(FA,Ac), a corn fiber-derived substrate enriched in O-acetyl and ferulic acid esters. Exhibits negligible acetyl esterase activity on sugar acetates. Acts synergistically with Xyl3A to increase the release of xylose from xylan. Does not possess endoglucanase or mannanase activities since it is not able to hydrolyze carboxymethyl cellulose and locust bean gum. This is Endo-1,4-beta-xylanase/feruloyl esterase from Xylanibacter ruminicola (strain ATCC 19189 / DSM 19721 / CIP 105475 / JCM 8958 / 23) (Prevotella ruminicola).